The following is a 274-amino-acid chain: Rhamnulose-1-phosphate aldolase (274 aa).

Residue Glu117 is part of the active site. Residues His141, His143, and His212 each contribute to the Zn(2+) site.

Belongs to the aldolase class II family. RhaD subfamily. As to quaternary structure, homotetramer. Zn(2+) serves as cofactor.

The protein resides in the cytoplasm. The enzyme catalyses L-rhamnulose 1-phosphate = (S)-lactaldehyde + dihydroxyacetone phosphate. The protein operates within carbohydrate degradation; L-rhamnose degradation; glycerone phosphate from L-rhamnose: step 3/3. Catalyzes the reversible cleavage of L-rhamnulose-1-phosphate to dihydroxyacetone phosphate (DHAP) and L-lactaldehyde. In Shigella boydii serotype 4 (strain Sb227), this protein is Rhamnulose-1-phosphate aldolase.